A 481-amino-acid chain; its full sequence is tRNA-2-methylthio-N(6)-dimethylallyladenosine synthase (481 aa).

One can recognise an MTTase N-terminal domain in the interval 24–140; that stretch reads KKLFIESYGC…LPNLLNEVEE (117 aa). Residues cysteine 33, cysteine 69, cysteine 103, cysteine 178, cysteine 182, and cysteine 185 each contribute to the [4Fe-4S] cluster site. Positions 164–411 constitute a Radical SAM core domain; it reads MSNGITALVA…DLQQKHAWWR (248 aa). The 64-residue stretch at 413–476 folds into the TRAM domain; that stretch reads EDFIGQTVEV…SGTLKGEAVG (64 aa).

Belongs to the methylthiotransferase family. MiaB subfamily. In terms of assembly, monomer. [4Fe-4S] cluster serves as cofactor.

Its subcellular location is the cytoplasm. It catalyses the reaction N(6)-dimethylallyladenosine(37) in tRNA + (sulfur carrier)-SH + AH2 + 2 S-adenosyl-L-methionine = 2-methylsulfanyl-N(6)-dimethylallyladenosine(37) in tRNA + (sulfur carrier)-H + 5'-deoxyadenosine + L-methionine + A + S-adenosyl-L-homocysteine + 2 H(+). In terms of biological role, catalyzes the methylthiolation of N6-(dimethylallyl)adenosine (i(6)A), leading to the formation of 2-methylthio-N6-(dimethylallyl)adenosine (ms(2)i(6)A) at position 37 in tRNAs that read codons beginning with uridine. In Flavobacterium psychrophilum (strain ATCC 49511 / DSM 21280 / CIP 103535 / JIP02/86), this protein is tRNA-2-methylthio-N(6)-dimethylallyladenosine synthase.